Reading from the N-terminus, the 951-residue chain is Valine--tRNA ligase (951 aa).

Residues 42–52 carry the 'HIGH' region motif; the sequence is PNVTGSLHMGH. The short motif at 554–558 is the 'KMSKS' region element; that stretch reads KMSKS. Residue lysine 557 participates in ATP binding. A coiled-coil region spans residues 880–944; sequence AGLINKEDEL…AEAKAKLIEQ (65 aa).

Belongs to the class-I aminoacyl-tRNA synthetase family. ValS type 1 subfamily. In terms of assembly, monomer.

Its subcellular location is the cytoplasm. The enzyme catalyses tRNA(Val) + L-valine + ATP = L-valyl-tRNA(Val) + AMP + diphosphate. Catalyzes the attachment of valine to tRNA(Val). As ValRS can inadvertently accommodate and process structurally similar amino acids such as threonine, to avoid such errors, it has a 'posttransfer' editing activity that hydrolyzes mischarged Thr-tRNA(Val) in a tRNA-dependent manner. This is Valine--tRNA ligase from Shigella boydii serotype 4 (strain Sb227).